We begin with the raw amino-acid sequence, 197 residues long: MASIQNLYETVVGVLGDQAGKVISALGEITVECLPEHYISVMTALHDHEDLHFELLVDLCGVDYSTYKNEAWQGKRFAVVSQLLSVKNNQRIRVRVWVSDDDFPVVESVADIYNSADWYEREAFDLYGIMFNNHPDLRRILTDYGFVGHPFRKDFPISGYVEMRYDEEQKRVIYQPVTIEPREITPRIVREENYGGQ.

The protein belongs to the complex I 30 kDa subunit family. NDH-1 is composed of 14 different subunits. Subunits NuoB, C, D, E, F, and G constitute the peripheral sector of the complex.

The protein localises to the cell inner membrane. It catalyses the reaction a quinone + NADH + 5 H(+)(in) = a quinol + NAD(+) + 4 H(+)(out). In terms of biological role, NDH-1 shuttles electrons from NADH, via FMN and iron-sulfur (Fe-S) centers, to quinones in the respiratory chain. The immediate electron acceptor for the enzyme in this species is believed to be ubiquinone. Couples the redox reaction to proton translocation (for every two electrons transferred, four hydrogen ions are translocated across the cytoplasmic membrane), and thus conserves the redox energy in a proton gradient. The protein is NADH-quinone oxidoreductase subunit C of Neisseria gonorrhoeae (strain ATCC 700825 / FA 1090).